Reading from the N-terminus, the 608-residue chain is Zinc metalloproteinase-disintegrin-like agkihagin (608 aa).

A signal peptide spans M1 to S20. Positions I21–P189 are excised as a propeptide. The region spanning K199–P395 is the Peptidase M12B domain. 3 disulfide bridges follow: C310-C390, C350-C374, and C352-C357. H335 provides a ligand contact to Zn(2+). E336 is a catalytic residue. Zn(2+) is bound by residues H339 and H345. The region spanning P403–N488 is the Disintegrin domain. Ca(2+)-binding residues include V405, N408, F410, E412, E415, and D418. Cystine bridges form between C406/C435, C417/C430, C419/C425, C429/C452, C443/C449, C448/C474, C461/C481, C468/C499, C492/C504, C511/C561, C526/C570, C539/C549, C556/C596, and C590/C601. A D/ECD-tripeptide motif is present at residues E467–D469. The Ca(2+) site is built by D469, M470, D472, D483, and R484. N-linked (GlcNAc...) asparagine glycosylation occurs at N501.

The protein belongs to the venom metalloproteinase (M12B) family. P-III subfamily. P-IIIc sub-subfamily. As to quaternary structure, homodimer; disulfide-linked. Requires Zn(2+) as cofactor. Expressed by the venom gland.

Its subcellular location is the secreted. Inhibited by EDTA and EGTA. Not inhibited by PMSF, antipain, pepstatin, and iodoacetamide. Its function is as follows. Strongly inhibits the collagen-induced human platelet aggregation. Hydrolyzes the Aalpha-chain of fibrinogen (FGA), without cleavage of Bbeta- and gamma-chains. Induces apoptosis and strongly inhibits proliferation of endothelial cells as well as adhesion of the cells to extracellular matrix proteins. The sequence is that of Zinc metalloproteinase-disintegrin-like agkihagin from Deinagkistrodon acutus (Hundred-pace snake).